The chain runs to 154 residues: Large ribosomal subunit protein uL13 (154 aa).

Belongs to the universal ribosomal protein uL13 family. In terms of assembly, part of the 50S ribosomal subunit.

Its function is as follows. This protein is one of the early assembly proteins of the 50S ribosomal subunit, although it is not seen to bind rRNA by itself. It is important during the early stages of 50S assembly. The protein is Large ribosomal subunit protein uL13 of Brucella suis (strain ATCC 23445 / NCTC 10510).